Reading from the N-terminus, the 814-residue chain is Coiled-coil and C2 domain-containing protein 1-like (814 aa).

The segment covering 1–11 (MFAKRKPEPAK) has biased composition (basic and acidic residues). Disordered stretches follow at residues 1-136 (MFAK…TFLP) and 157-263 (EANA…RSRQ). Residues 25-47 (IPDDFDPTSGYGDDDGGDSDLEA) are compositionally biased toward acidic residues. Positions 73 to 85 (DLDKMIADSLRDV) are enriched in basic and acidic residues. 2 stretches are compositionally biased toward acidic residues: residues 86-100 (SDDD…DSDL) and 110-130 (LEEE…EEEP). The interval 143–201 (LGIIKQRLEIYKQAEANAKASGDSGKARRFGRGLKTLQDLHKQAAAGKTINVDDIPPEV) is DM14 1. The span at 205 to 230 (PAGDPSPAADESPAPSTPVSQPTRVA) shows a compositional bias: low complexity. A compositionally biased stretch (pro residues) spans 231 to 254 (PAPPTPTSPPAATPPPAPATPPNP). DM14 stretches follow at residues 256–314 (VAQM…PPPP) and 358–416 (LEAL…PVPP). A coiled-coil region spans residues 351–378 (AAAAESMLEALQRRLEKYKSVEAAAKAE). The segment covering 414 to 425 (VPPGFGPLPSTE) has biased composition (pro residues). A disordered region spans residues 414-486 (VPPGFGPLPS…LTTRVTGNHQ (73 aa)). A compositionally biased stretch (low complexity) spans 426–462 (PAPAATPSLPTSPTSPPATASTSAGGTPSGSSATTPT). Residues 475 to 486 (TELTTRVTGNHQ) are compositionally biased toward polar residues. Residues 495–553 (MKLLLERQKEFKVAAIEAKKAGEIDQAKEYLKIYKGFDSLLNAASSGLPVDLSTLPVPP) are DM14 4. Positions 633–772 (RKGQPLPKFH…ETKCDIHDTY (140 aa)) constitute a C2 domain.

Belongs to the CC2D1 family. As to quaternary structure, interacts (via DM14 domains 1 and 3) with shrb; the interaction is direct and blocks access to the surface involved in shrb polymerization. This interaction may be required for the ESCRT-III complex role in multivesicular body formation.

It localises to the cytoplasm. Its subcellular location is the cytosol. The protein localises to the apicolateral cell membrane. It is found in the cell cortex. The protein resides in the endosome. In terms of biological role, phosphatidyl inositol monophosphate binding protein involved in endosomal protein sorting through regulation of the endosomal sorting required for transport (ESCRT) pathway. Required for full activity of the ESCRT-III complex core component shrb/shrub, probably by preventing its inappropriate polymerisation. Required, but not essential, for the efficient generation of intraluminal vesicles (ILVs) in multivesicular bodies (MVBs). Involved in a late stage of the endosomal pathway targeting transmembrane proteins of the plasma membrane for lysosomal degradation. Plays a critical role in regulation of multiple signal transduction pathways, including the Notch and BMP/decapentaplegic (dpp) signaling pathways, through targeting of membrane bound receptors to multivesicular bodies, isolating them from the cytoplasm and targeting them for lysosomal degradation. Involved in targeting N/Notch for endosomal degradation, negatively regulating the Notch signaling pathway. Regulates Notch signaling in imaginal disk cells and follicle cells during oogenesis and multiple developmental processes, including development of wings, veins, legs, eyes and bristles. Restricts the activity of Notch to the dorsoventral (D/V) boundary of the wing imaginal disk. In external sensory organ development regulates Notch signaling during asymmetric cell division and differentiation of sensory organ precursor cells. May be involved in regulation of apoptosis and cell growth independent of Notch signaling. Involved in targeting tkv for endosomal degradation, negatively regulating the BMP/decapentaplegic (dpp) signaling pathway. Regulates the BMP/dpp signaling pathway in follicle cells during oogenesis, but not in imaginal disk cells during wing development. May be involved in differentiation or morphogenesis of peripodial epithelial cells in the developing imaginal disk. Involved in abscission of germline cells during oogenesis. In Drosophila pseudoobscura pseudoobscura (Fruit fly), this protein is Coiled-coil and C2 domain-containing protein 1-like.